The sequence spans 466 residues: Asparagine--tRNA ligase (466 aa).

The protein belongs to the class-II aminoacyl-tRNA synthetase family. In terms of assembly, homodimer.

It localises to the cytoplasm. It carries out the reaction tRNA(Asn) + L-asparagine + ATP = L-asparaginyl-tRNA(Asn) + AMP + diphosphate + H(+). This Klebsiella pneumoniae subsp. pneumoniae (strain ATCC 700721 / MGH 78578) protein is Asparagine--tRNA ligase.